The primary structure comprises 74 residues: Anionic peptide clone 9 (74 aa).

An N-terminal signal peptide occupies residues 1–24 (MVSKSLIVLLLVSVLVSTFFTTEA).

This sequence belongs to the non-disulfide-bridged peptide (NDBP) superfamily. Long chain multifunctional peptide (group 2) family. Expressed by the venom gland.

Its subcellular location is the secreted. Its function is as follows. May be an antimicrobial peptide. This is Anionic peptide clone 9 from Tityus costatus (Brazilian scorpion).